Reading from the N-terminus, the 102-residue chain is Large ribosomal subunit protein bL21 (102 aa).

Basic residues predominate over residues 79-91 (RKDSKRKKGHRQP). Residues 79–102 (RKDSKRKKGHRQPYTKLTIDKINA) are disordered.

It belongs to the bacterial ribosomal protein bL21 family. Part of the 50S ribosomal subunit. Contacts protein L20.

Its function is as follows. This protein binds to 23S rRNA in the presence of protein L20. This Staphylococcus carnosus (strain TM300) protein is Large ribosomal subunit protein bL21.